We begin with the raw amino-acid sequence, 2465 residues long: MEPIAIVGSACRFPGDATSPSKLWELLKAPRDLSQEVKRFNAKGFYHENGHHHGASNVMAAYTLESDPMEFDPQFFNIQPGEAESMDPQHRLLLETTYEGLEQAGIPIESLRGSDTSAFIGVMSADYTTMVFFDSECTPTYSATGTSRAILSNRLSHAFDWRGASMTLDTACSSSLVAIHLAVRELRSGSSRVAVAGGTNLILSADPFISETNLDMLSPQGKCHMWDARANGYARGEGISVVVLKTLRDALADGDHIECIIRETGVNQDGHTPGITMPNPEAQTRLIRDVYSRAGLDLSKPEDRCQYFEAHGTGTKAGDKVESRAIHDAFFPETGGEQAPLEPLYVGSVKTIIGHTEGTAGVAGVLRASLAIQNGTIPPNLHFESLNPELKPYYGNLQIATEAIPWPELHGGVRRASVNSFGFGGANCHVILEGYLPSYGDDALREVVSKPSLSSSPSLSPTSTSPPTPRTPANSLPFLISASSEKTLRKLVQRYIDHVGQNPNVDMGNLAWTLFKNRSALNFRLAVPAPTPEALITTLESVLKQPAGGPKSSIIRTVSQPKRLLGVFTGQGAQWATMGRQLVQKSARAAATVDRLDAALAALPDPYRPTWSLKAQILAEKKASRIDESAVSQPLCTVIQIILVDLLRNAGVDFDGVLGHSSGEIAAAYAAGFLSAEDAVKIAYTRGLCAHLARGQQGEKGGMIAAGMTHPDAKDLCENEAVLGRISVAAYNSPTSVTLSGDSDVIDQVSVVLEDEDKFNRVLRVQTAYHSHHMEACVGLYRKALAACNITVLNPAQHVPWFSSVYGGSVMSATSNIASEYWIQNMVQPVLFSEAVAAASQTEHQDALPTLAEIGPHPALKSPVLETLKSLGIDKVAYCGTLSRAVDDVDALSAFFGWFWSVSAQSGLQLDRYAAQFSQNKLVSLRNLPSYPWDHTHSYEFESRESHAHRFRELPCHPLLGVRTNTCGDAEYRWKNFLSTEEIPWLTGHQIQGQTLVPAAMFLIMAAEAATIAAGSLGLQVRLIELHDSTIHRALALDDDKSTETLFYLSGVEVTSSPNEGSILSATYHCDAATSKSSSRLTSIASGKVQLFVGGDASRTLPNSALGSGQLNEIDVDTFYDNLRTIGYNYNGAFRSIASLQRTTNWANGTIAAPTSTDPATSPSWVPLHPAVLDVSFQAVFAALSYPGDGRLQTLHVPTTIKRLTISPAALSSGAIPAGGFAFNAVSYMLDRRTICGDIEVGIAGQEESIFKVEGLTVSPVAPVTADDDKHMFADMVLCVAEPSTALLPDVPEQLLANTLSQNYGEAENAVSNKHSSLENGHLTNGHCLANGGHSTNGLTNGHASTNGHGSTNGHISTNGHSTNGDVLTNGHSVNGHAHSNGHSENGAISVNKPTAGGYTADKARSYHIVAGLLKQITDRYPKARILERVTDNASEVLNVFTAIGGRLSSYALDGIAESEFDAIADSRDDGSSLKRVSLQLESPSFLETNAGGEYDVVVLRDGHATDKGTLQLLRHLLRPGGYLLLIHELDQSLASLEGDSELWSGRFTEAGFSKMEAQGSSKSGRFSIMATMATNDAVDALRQPMVSVGAKIPTLIIIGGETPVTVDLIGKIRALLAPFCQVVQTVKSLAHLDDSAVAEKAFVLSLTELDSDLYRDLSEKTFTKLQELTTRSDRLIWVVSGSQGRNPYANMIKGTLRCLIEECSHLVTQILDIEDNVSGAGQFISDAVLRLHNLHSMENASKTLWSHEPELHLRNGQPFISRYLPNKQLDLGYNSLQRHVQVELQPTAGVLQLSADKSALSLERLRVAALPSSHLAANELETEIIVRYSQSVAVHVPALGYLYPVTGTDVQTGRVVAALSTENRSRVSVHKATLVPLIGLSDDQERSLPERLQAFFLAATIMQRCPPFTSAVVHEASNSLTQLLVDAGRKSGVQFIFTTSDASRVDEIQEQGWKFIARHGSTRQLSKLVQPDTLMCVDCTQTGSGDSLAAMGLQVPSGVAVLTASDFVRPQSFKYRKIEDQAVHEALKAAVAETTSLAAEKSDLGADGMIQIQDLPQSFAFGVPAKTISWVNELPVRATVLPALEECHFNPDRTYFLVGMAGSLGLSTVSYMISRGARHFALSSRNPQVDAAWIAAQRTKYGAVVNTFALDITDKAALTKTIAAIRATMPPIGGVANGALIIEDSLFADLTYKQMTRALGPKVDGSRYLDEAFGQDDLEFFILYSSLVSIAGNTGQIAYAVANSFMVSLAHQRRQRGLAASVINLTGVSGIGFITRTGHNIIARSKALGYDIISESDYCYIFAESVLASPSTSPHGPEVSSSLRYVDVARDKVVPPWAYDAKFGHYLLDRQAPATNGAAGESDNGGHLSLDVLKAAPPAECYDMIFRAFQTVLQKLLRLPADQPVPAEVQILDLGVDSLVAVKMRQWFLKELQVNMPVMKLIGGATVSQVVWSVVHQILPESAK.

In terms of domain architecture, Ketosynthase family 3 (KS3) spans 1 to 434; it reads MEPIAIVGSA…GANCHVILEG (434 aa). Active-site for beta-ketoacyl synthase activity residues include Cys-172, His-311, and His-355. Residues 450–476 form a disordered region; that stretch reads KPSLSSSPSLSPTSTSPPTPRTPANSL. Residues 451 to 463 show a composition bias toward low complexity; sequence PSLSSSPSLSPTS. The segment at 567 to 888 is malonyl-CoA:ACP transacylase (MAT) domain; it reads VFTGQGAQWA…CGTLSRAVDD (322 aa). The segment at 957 to 1096 is N-terminal hotdog fold; it reads HPLLGVRTNT…GKVQLFVGGD (140 aa). Positions 957 to 1265 are dehydratase (DH) domain; that stretch reads HPLLGVRTNT…LTVSPVAPVT (309 aa). The region spanning 957–1267 is the PKS/mFAS DH domain; sequence HPLLGVRTNT…VSPVAPVTAD (311 aa). The Proton acceptor; for dehydratase activity role is filled by His-989. The interval 1111 to 1267 is C-terminal hotdog fold; that stretch reads LNEIDVDTFY…VSPVAPVTAD (157 aa). Asp-1174 (proton donor; for dehydratase activity) is an active-site residue. Positions 1334 to 1367 are disordered; it reads HSTNGLTNGHASTNGHGSTNGHISTNGHSTNGDV. The ketoreductase (KR)domain stretch occupies residues 2095-2269; that stretch reads TYFLVGMAGS…AASVINLTGV (175 aa). The 76-residue stretch at 2384–2459 folds into the Carrier domain; that stretch reads DMIFRAFQTV…QVVWSVVHQI (76 aa). Ser-2419 is modified (O-(pantetheine 4'-phosphoryl)serine).

It depends on pantetheine 4'-phosphate as a cofactor.

The enzyme catalyses 10 malonyl-CoA + acetyl-CoA + 3 AH2 + 8 NADPH + 18 H(+) = cordypyrone A + 3 A + 10 CO2 + 8 NADP(+) + 11 CoA + 8 H2O. It participates in secondary metabolite biosynthesis. Its function is as follows. Highly reducing polyketide synthase (HR-PKS); part of the gene cluster that mediates the biosynthesis of cordypyrones A and B, 2 pyrones that show modest activities against pathogenic bacteria including methicillin-resistant Staphylococcus aureus (MRSA), Mycobacterium tuberculosis and Bacillus cereus. The HR-PKS milA catalyzes the formation of cordypyrones A via condensation of one acetate with 10 malonate units. Since milA lacks an enoyl reductase domain, the 2 beta-keto processing domains DH and KR of milA collaborate with the trans-enoyl reductase milB to catalyze the different levels of reduction. The cytochrome P450 monooxygenase milC then hydroxylates the C-22 of cordypyrones A to yield cordypyrones B. This is Highly reducing polyketide synthase milA from Cordyceps militaris (strain CM01) (Caterpillar fungus).